The primary structure comprises 247 residues: 3-deoxy-manno-octulosonate cytidylyltransferase (247 aa).

The protein belongs to the KdsB family.

The protein resides in the cytoplasm. It catalyses the reaction 3-deoxy-alpha-D-manno-oct-2-ulosonate + CTP = CMP-3-deoxy-beta-D-manno-octulosonate + diphosphate. It functions in the pathway nucleotide-sugar biosynthesis; CMP-3-deoxy-D-manno-octulosonate biosynthesis; CMP-3-deoxy-D-manno-octulosonate from 3-deoxy-D-manno-octulosonate and CTP: step 1/1. Its pathway is bacterial outer membrane biogenesis; lipopolysaccharide biosynthesis. In terms of biological role, activates KDO (a required 8-carbon sugar) for incorporation into bacterial lipopolysaccharide in Gram-negative bacteria. The sequence is that of 3-deoxy-manno-octulosonate cytidylyltransferase from Afipia carboxidovorans (strain ATCC 49405 / DSM 1227 / KCTC 32145 / OM5) (Oligotropha carboxidovorans).